The chain runs to 795 residues: Phenylalanine--tRNA ligase beta subunit (795 aa).

Residues 39–148 enclose the tRNA-binding domain; the sequence is AGSFNGVVVG…ADAPLGTDIR (110 aa). The B5 domain maps to 401–476; sequence PKRATITLRR…RVYGYNNIPD (76 aa). The Mg(2+) site is built by aspartate 454, aspartate 460, glutamate 463, and glutamate 464. The FDX-ACB domain maps to 701–794; it reads SRFPANRRDI…LKERFQASLR (94 aa).

This sequence belongs to the phenylalanyl-tRNA synthetase beta subunit family. Type 1 subfamily. As to quaternary structure, tetramer of two alpha and two beta subunits. Requires Mg(2+) as cofactor.

The protein resides in the cytoplasm. It catalyses the reaction tRNA(Phe) + L-phenylalanine + ATP = L-phenylalanyl-tRNA(Phe) + AMP + diphosphate + H(+). The protein is Phenylalanine--tRNA ligase beta subunit of Salmonella paratyphi A (strain ATCC 9150 / SARB42).